We begin with the raw amino-acid sequence, 36 residues long: Phospholipase A2 hemilipin-2 (36 aa).

It belongs to the phospholipase A2 family. Group III subfamily. Heterodimer composed of a small subunit and a large subunit; disulfid-linked. Requires Ca(2+) as cofactor. In terms of tissue distribution, expressed by the venom gland.

The protein resides in the secreted. The catalysed reaction is a 1,2-diacyl-sn-glycero-3-phosphocholine + H2O = a 1-acyl-sn-glycero-3-phosphocholine + a fatty acid + H(+). Scorpion venom phospholipase A2 (PLA2) that impacts angiogenesis in vitro and in vivo without showing any cytotoxic or apoptotic signs. The antiangiogenic effect is independent from the catalytic activity and seems to be held by its small subunit. PLA2 catalyzes the calcium-dependent hydrolysis of the 2-acyl groups in 3-sn-phosphoglycerides. The protein is Phospholipase A2 hemilipin-2 of Hemiscorpius lepturus (Scorpion).